A 193-amino-acid chain; its full sequence is Pyridoxal 5'-phosphate synthase subunit PdxT (193 aa).

L-glutamine is bound at residue 48–50 (GES). C80 functions as the Nucleophile in the catalytic mechanism. L-glutamine contacts are provided by residues R112 and 140–141 (IR). Catalysis depends on charge relay system residues H176 and E178.

The protein belongs to the glutaminase PdxT/SNO family. In the presence of PdxS, forms a dodecamer of heterodimers. Only shows activity in the heterodimer.

The enzyme catalyses aldehydo-D-ribose 5-phosphate + D-glyceraldehyde 3-phosphate + L-glutamine = pyridoxal 5'-phosphate + L-glutamate + phosphate + 3 H2O + H(+). It carries out the reaction L-glutamine + H2O = L-glutamate + NH4(+). It functions in the pathway cofactor biosynthesis; pyridoxal 5'-phosphate biosynthesis. Functionally, catalyzes the hydrolysis of glutamine to glutamate and ammonia as part of the biosynthesis of pyridoxal 5'-phosphate. The resulting ammonia molecule is channeled to the active site of PdxS. This Mycolicibacterium smegmatis (strain ATCC 700084 / mc(2)155) (Mycobacterium smegmatis) protein is Pyridoxal 5'-phosphate synthase subunit PdxT.